A 260-amino-acid chain; its full sequence is FAS1 domain-containing protein SELMODRAFT_448915 (260 aa).

Residues 1 to 35 (MRRTGRSYKPLLSQLKDHHIPVHPSSRAERAMESR) lie on the Cytoplasmic side of the membrane. A helical transmembrane segment spans residues 36–58 (TLLVLLFVGVVTIVSSGLERAAA). The FAS1 domain maps to 59 to 198 (QDDTDDGILP…IACHGIDRVL (140 aa)). The Extracellular portion of the chain corresponds to 59–260 (QDDTDDGILP…SSASRYPVSE (202 aa)). N-linked (GlcNAc...) asparagine glycosylation is found at asparagine 118, asparagine 169, asparagine 176, asparagine 201, asparagine 236, and asparagine 247. The segment at 210–260 (PEASPPFGAEQASPAPEALPPGTRSPNNTANPSNRKSNSTRSSASRYPVSE) is disordered. The span at 233–254 (RSPNNTANPSNRKSNSTRSSAS) shows a compositional bias: polar residues.

The protein localises to the membrane. The protein is FAS1 domain-containing protein SELMODRAFT_448915 of Selaginella moellendorffii (Spikemoss).